A 520-amino-acid polypeptide reads, in one-letter code: Na(+)/H(+) antiporter NhaB (520 aa).

The next 12 membrane-spanning stretches (helical) occupy residues 27–49, 62–82, 97–117, 120–140, 144–164, 202–222, 238–258, 303–323, 348–368, 391–411, 447–467, and 475–495; these read GFLILNPLVFWVSPFTAGWLLVI, YPLLPGGLLAVEALFIGMTSA, LLLIFMVAGIYFMKQLLLLIF, LLLGIRSKTLLSLAFCFAAAF, FLDALTVVAVVISVAVGFYGI, LMMHAGVGTALGGVMTMVGEP, FLLRVAPVSVPVFICGIVTCI, GLIGVWLITALALHLAEVGLI, TEALPFTALLTVFFAVVAVII, LFYLFNGLLSSISDNVFVGTV, ATPNGQAAFLFLLTSALAPLI, and VWMALPYTIVLTLVGLACVQF.

Belongs to the NhaB Na(+)/H(+) (TC 2.A.34) antiporter family.

The protein localises to the cell inner membrane. The enzyme catalyses 2 Na(+)(in) + 3 H(+)(out) = 2 Na(+)(out) + 3 H(+)(in). Na(+)/H(+) antiporter that extrudes sodium in exchange for external protons. This is Na(+)/H(+) antiporter NhaB from Cronobacter sakazakii (strain ATCC BAA-894) (Enterobacter sakazakii).